The sequence spans 249 residues: Tumor necrosis factor ligand superfamily member 12 (249 aa).

At 1-21 the chain is on the cytoplasmic side; it reads MAARRSQRRRGRRGEPGTALL. Residues 22-42 form a helical; Signal-anchor for type II membrane protein membrane-spanning segment; the sequence is VPLALGLGLALACLGLLLAVV. At 43–249 the chain is on the extracellular side; sequence SLGSRASLSA…LTYFGLFQVH (207 aa). The interval 55–85 is disordered; it reads PAQEELVAEEDQDPSELNPQTEESQDPAPFL. Residues 56-68 are compositionally biased toward acidic residues; that stretch reads AQEELVAEEDQDP. Residues 107-248 enclose the THD domain; that stretch reads IAAHYEVHPR…FLTYFGLFQV (142 aa). N-linked (GlcNAc...) asparagine glycosylation occurs at N139. Cysteines 191 and 210 form a disulfide.

The protein belongs to the tumor necrosis factor family. In terms of assembly, homotrimer. Interacts with the angiogenic factor AGGF1/VG5Q. Post-translationally, the soluble form derives from the membrane form by proteolytic processing. As to expression, highly expressed in adult heart, pancreas, skeletal muscle, brain, colon, small intestine, lung, ovary, prostate, spleen, lymph node, appendix and peripheral blood lymphocytes. Low expression in kidney, testis, liver, placenta, thymus and bone marrow. Also detected in fetal kidney, liver, lung and brain.

The protein localises to the cell membrane. It localises to the secreted. Functionally, binds to FN14 and possibly also to TNRFSF12/APO3. Weak inducer of apoptosis in some cell types. Mediates NF-kappa-B activation. Promotes angiogenesis and the proliferation of endothelial cells. Also involved in induction of inflammatory cytokines. Promotes IL8 secretion. In Homo sapiens (Human), this protein is Tumor necrosis factor ligand superfamily member 12 (TNFSF12).